Reading from the N-terminus, the 134-residue chain is Profilin (134 aa).

This sequence belongs to the profilin family. In terms of assembly, occurs in many kinds of cells as a complex with monomeric actin in a 1:1 ratio.

The protein resides in the cytoplasm. It is found in the cytoskeleton. Functionally, binds to actin and affects the structure of the cytoskeleton. At high concentrations, profilin prevents the polymerization of actin, whereas it enhances it at low concentrations. By binding to PIP2, it inhibits the formation of IP3 and DG. In Brassica napus (Rape), this protein is Profilin.